Consider the following 269-residue polypeptide: Ubiquinone/menaquinone biosynthesis C-methyltransferase UbiE (269 aa).

Residues T92, D113, and 141-142 (NA) contribute to the S-adenosyl-L-methionine site.

This sequence belongs to the class I-like SAM-binding methyltransferase superfamily. MenG/UbiE family.

It carries out the reaction a 2-demethylmenaquinol + S-adenosyl-L-methionine = a menaquinol + S-adenosyl-L-homocysteine + H(+). The enzyme catalyses a 2-methoxy-6-(all-trans-polyprenyl)benzene-1,4-diol + S-adenosyl-L-methionine = a 5-methoxy-2-methyl-3-(all-trans-polyprenyl)benzene-1,4-diol + S-adenosyl-L-homocysteine + H(+). Its pathway is quinol/quinone metabolism; menaquinone biosynthesis; menaquinol from 1,4-dihydroxy-2-naphthoate: step 2/2. It participates in cofactor biosynthesis; ubiquinone biosynthesis. Methyltransferase required for the conversion of demethylmenaquinol (DMKH2) to menaquinol (MKH2) and the conversion of 2-polyprenyl-6-methoxy-1,4-benzoquinol (DDMQH2) to 2-polyprenyl-3-methyl-6-methoxy-1,4-benzoquinol (DMQH2). The chain is Ubiquinone/menaquinone biosynthesis C-methyltransferase UbiE from Brucella canis (strain ATCC 23365 / NCTC 10854 / RM-666).